We begin with the raw amino-acid sequence, 322 residues long: Glucokinase (322 aa).

10 to 15 (GDIGGT) lines the ATP pocket.

It belongs to the bacterial glucokinase family.

The protein resides in the cytoplasm. The catalysed reaction is D-glucose + ATP = D-glucose 6-phosphate + ADP + H(+). The sequence is that of Glucokinase from Hahella chejuensis (strain KCTC 2396).